A 267-amino-acid chain; its full sequence is Phosphonoacetaldehyde hydrolase (267 aa).

Aspartate 10 (nucleophile) is an active-site residue. 2 residues coordinate Mg(2+): aspartate 10 and alanine 12. Lysine 51 (schiff-base intermediate with substrate) is an active-site residue. Aspartate 184 serves as a coordination point for Mg(2+).

The protein belongs to the HAD-like hydrolase superfamily. PhnX family. In terms of assembly, homodimer. It depends on Mg(2+) as a cofactor.

It catalyses the reaction phosphonoacetaldehyde + H2O = acetaldehyde + phosphate + H(+). In terms of biological role, involved in phosphonate degradation. The polypeptide is Phosphonoacetaldehyde hydrolase (Paraburkholderia xenovorans (strain LB400)).